The primary structure comprises 230 residues: NAD(P)H-hydrate epimerase (230 aa).

Positions 11 to 218 (AIAVDQELFN…ALQRKYELNL (208 aa)) constitute a YjeF N-terminal domain. 61-65 (NNGGD) lines the (6S)-NADPHX pocket. The K(+) site is built by N62 and D126. Residues 130-136 (GFSFKPP) and D159 contribute to the (6S)-NADPHX site. S162 is a K(+) binding site.

Belongs to the NnrE/AIBP family. K(+) is required as a cofactor.

The catalysed reaction is (6R)-NADHX = (6S)-NADHX. It catalyses the reaction (6R)-NADPHX = (6S)-NADPHX. Its function is as follows. Catalyzes the epimerization of the S- and R-forms of NAD(P)HX, a damaged form of NAD(P)H that is a result of enzymatic or heat-dependent hydration. This is a prerequisite for the S-specific NAD(P)H-hydrate dehydratase to allow the repair of both epimers of NAD(P)HX. The protein is NAD(P)H-hydrate epimerase of Drosophila sechellia (Fruit fly).